The sequence spans 210 residues: ATP phosphoribosyltransferase (210 aa).

The protein belongs to the ATP phosphoribosyltransferase family. Short subfamily. Heteromultimer composed of HisG and HisZ subunits.

The protein localises to the cytoplasm. The catalysed reaction is 1-(5-phospho-beta-D-ribosyl)-ATP + diphosphate = 5-phospho-alpha-D-ribose 1-diphosphate + ATP. Its pathway is amino-acid biosynthesis; L-histidine biosynthesis; L-histidine from 5-phospho-alpha-D-ribose 1-diphosphate: step 1/9. In terms of biological role, catalyzes the condensation of ATP and 5-phosphoribose 1-diphosphate to form N'-(5'-phosphoribosyl)-ATP (PR-ATP). Has a crucial role in the pathway because the rate of histidine biosynthesis seems to be controlled primarily by regulation of HisG enzymatic activity. In Petrotoga mobilis (strain DSM 10674 / SJ95), this protein is ATP phosphoribosyltransferase.